A 341-amino-acid chain; its full sequence is GTPase Obg (341 aa).

Residues 1 to 159 (MKFVDEALIK…RNLRLELRVL (159 aa)) form the Obg domain. Residues 128–150 (TRYKSSVNRSPRQTTPGSPGESR) are disordered. Over residues 129–144 (RYKSSVNRSPRQTTPG) the composition is skewed to polar residues. The 175-residue stretch at 160–334 (ADVGLLGLPN…LCYALMQLID (175 aa)) folds into the OBG-type G domain. GTP-binding positions include 166-173 (GLPNAGKS), 191-195 (FTTLH), 213-216 (DIPG), 283-286 (NKID), and 315-317 (SAI). 2 residues coordinate Mg(2+): serine 173 and threonine 193.

This sequence belongs to the TRAFAC class OBG-HflX-like GTPase superfamily. OBG GTPase family. As to quaternary structure, monomer. Requires Mg(2+) as cofactor.

The protein resides in the cytoplasm. In terms of biological role, an essential GTPase which binds GTP, GDP and possibly (p)ppGpp with moderate affinity, with high nucleotide exchange rates and a fairly low GTP hydrolysis rate. Plays a role in control of the cell cycle, stress response, ribosome biogenesis and in those bacteria that undergo differentiation, in morphogenesis control. The chain is GTPase Obg from Legionella pneumophila (strain Paris).